Reading from the N-terminus, the 500-residue chain is Plasma protease C1 inhibitor (500 aa).

Positions 1–22 are cleaved as a signal peptide; sequence MASRLTLLTLLLLLLAGDRASS. Residues 20-31 are compositionally biased toward low complexity; the sequence is ASSNPNATSSSS. The interval 20-43 is disordered; the sequence is ASSNPNATSSSSQDPESLQDRGEG. N-linked (GlcNAc...) (complex) asparagine glycosylation occurs at Asn-25. Thr-47 and Thr-48 each carry an O-linked (GalNAc...) threonine glycan. O-linked (GalNAc...) serine glycosylation is present at Ser-64. Positions 65–118 are disordered; that stretch reads LPTTNSTTNSATKITANTTDEPTTQPTTEPTTQPTIQPTQPTTQLPTDSPTQPT. Positions 67–118 are enriched in low complexity; it reads TTNSTTNSATKITANTTDEPTTQPTTEPTTQPTIQPTQPTTQLPTDSPTQPT. An N-linked (GlcNAc...) asparagine glycan is attached at Asn-69. Residue Thr-71 is glycosylated (O-linked (GalNAc...) threonine). Asn-81 carries an N-linked (GlcNAc...) asparagine glycan. 4 O-linked (GalNAc...) threonine glycosylation sites follow: Thr-83, Thr-88, Thr-92, and Thr-96. 7 consecutive repeat copies span residues 85 to 88, 89 to 92, 93 to 96, 97 to 100, 101 to 104, 105 to 108, and 116 to 119. The 7 X 4 AA tandem repeats of [QE]-P-T-[TQ] stretch occupies residues 85 to 119; the sequence is EPTTQPTTEPTTQPTIQPTQPTTQLPTDSPTQPTT. Cystine bridges form between Cys-123–Cys-428 and Cys-130–Cys-205. N-linked (GlcNAc...) (complex) asparagine glycans are attached at residues Asn-238 and Asn-253. N-linked (GlcNAc...) asparagine; in variant TA glycosylation occurs at Asn-272. A glycan (N-linked (GlcNAc...) (complex) asparagine) is linked at Asn-352.

It belongs to the serpin family. As to quaternary structure, interacts with MASP1. (Microbial infection) Binds to E.coli stcE which allows localization of SERPING1 to cell membranes thus protecting the bacteria against complement-mediated lysis. Highly glycosylated (49%) with N- and O-glycosylation. O-glycosylated with core 1 or possibly core 8 glycans. N-glycan heterogeneity at Asn-25: Hex5HexNAc4 (minor), dHex1Hex5HexNAc4 (minor), Hex6HexNAc5 (major) and dHex1Hex6HexNAc5 (minor). Post-translationally, cleaved by C1S in vitro. In terms of processing, (Microbial infection) Can be proteolytically cleaved by E.coli stcE.

It localises to the secreted. Functionally, serine protease inhibitor, which acrs as a regulator of the classical complement pathway. Forms a proteolytically inactive stoichiometric complex with the C1r or C1s proteases. May also regulate blood coagulation, fibrinolysis and the generation of kinins. Very efficient inhibitor of FXIIa. Inhibits chymotrypsin and kallikrein. The protein is Plasma protease C1 inhibitor (SERPING1) of Homo sapiens (Human).